A 1160-amino-acid polypeptide reads, in one-letter code: ATP-dependent helicase/deoxyribonuclease subunit B (1160 aa).

It belongs to the helicase family. AddB/RexB type 2 subfamily. Heterodimer of AddA and RexB. Requires Mg(2+) as cofactor.

Functionally, the heterodimer acts as both an ATP-dependent DNA helicase and an ATP-dependent, dual-direction single-stranded exonuclease. Recognizes the chi site generating a DNA molecule suitable for the initiation of homologous recombination. This subunit has 5' -&gt; 3' nuclease activity but not helicase activity. In Lactobacillus helveticus (strain DPC 4571), this protein is ATP-dependent helicase/deoxyribonuclease subunit B.